A 104-amino-acid polypeptide reads, in one-letter code: Large ribosomal subunit protein uL23 (104 aa).

Belongs to the universal ribosomal protein uL23 family. In terms of assembly, part of the 50S ribosomal subunit. Contacts protein L29, and trigger factor when it is bound to the ribosome.

One of the early assembly proteins it binds 23S rRNA. One of the proteins that surrounds the polypeptide exit tunnel on the outside of the ribosome. Forms the main docking site for trigger factor binding to the ribosome. This is Large ribosomal subunit protein uL23 from Neisseria meningitidis serogroup B (strain ATCC BAA-335 / MC58).